The sequence spans 200 residues: Lipopolysaccharide core heptose(II)-phosphate phosphatase (200 aa).

A signal peptide spans 1–25 (MLAFCRSSLKSKKYFIILLALAAIA).

It belongs to the phosphoglycerate mutase family. Ais subfamily.

The protein resides in the periplasm. The protein operates within bacterial outer membrane biogenesis; lipopolysaccharide metabolism. Functionally, catalyzes the dephosphorylation of heptose(II) of the outer membrane lipopolysaccharide core. The sequence is that of Lipopolysaccharide core heptose(II)-phosphate phosphatase from Escherichia coli O6:K15:H31 (strain 536 / UPEC).